The primary structure comprises 168 residues: Heat shock protein beta-9 (168 aa).

A compositionally biased stretch (polar residues) spans 1 to 12 (MQRVGSSFSTGQ). 3 disordered regions span residues 1–25 (MQRV…SRCP), 83–104 (TGQR…EQSV), and 129–168 (LWLR…VKNP). The sHSP domain maps to 38–151 (LPVRLLRDEV…EAQTGQSQKP (114 aa)). The segment covering 86 to 104 (RQHESNDPSRGRYRMEQSV) has biased composition (basic and acidic residues). A compositionally biased stretch (polar residues) spans 158 to 168 (SSLQNESVKNP).

It belongs to the small heat shock protein (HSP20) family. In terms of tissue distribution, testis specific.

It localises to the cytoplasm. It is found in the nucleus. In Mus musculus (Mouse), this protein is Heat shock protein beta-9 (Hspb9).